A 222-amino-acid chain; its full sequence is Protein-L-isoaspartate O-methyltransferase (222 aa).

Residue Ser73 is part of the active site.

This sequence belongs to the methyltransferase superfamily. L-isoaspartyl/D-aspartyl protein methyltransferase family.

The protein localises to the cytoplasm. It carries out the reaction [protein]-L-isoaspartate + S-adenosyl-L-methionine = [protein]-L-isoaspartate alpha-methyl ester + S-adenosyl-L-homocysteine. Its function is as follows. Catalyzes the methyl esterification of L-isoaspartyl residues in peptides and proteins that result from spontaneous decomposition of normal L-aspartyl and L-asparaginyl residues. It plays a role in the repair and/or degradation of damaged proteins. This is Protein-L-isoaspartate O-methyltransferase from Chromobacterium violaceum (strain ATCC 12472 / DSM 30191 / JCM 1249 / CCUG 213 / NBRC 12614 / NCIMB 9131 / NCTC 9757 / MK).